The primary structure comprises 112 residues: MAQTLNSYKMAEIMYKILEKKGELTLEDILAQFEISVPSAYNIQRALKAICERHPDECEVQYKNRKTTFKWIKQEQKEEQKQEQTQDNIAKIFDAQPANFEQTDQGFIKAKQ.

In terms of biological role, essential for virus function. This is Protein F-112 from Saccharolobus solfataricus (Sulfolobus solfataricus).